Here is a 136-residue protein sequence, read N- to C-terminus: Protein LITTLE ZIPPER 1 (136 aa).

Residues 97–122 (ENQNIIRENEKLKKKALLLHQENKTL) are a coiled coil.

Interacts with REV. Expressed in the adaxial epidermis of the cotyledons and in the vascular cylinder of wild-type torpedo stage embryos.

Functionally, competitive inhibitor of the HD-ZIPIII transcription factors in shoot apical meristem (SAM) development. Acts by forming non-functional heterodimers. Part of a negative feedback loop. Essential for proper functioning of stem cells in the SAM. The polypeptide is Protein LITTLE ZIPPER 1 (Arabidopsis thaliana (Mouse-ear cress)).